The chain runs to 470 residues: Pyruvate kinase I (470 aa).

Substrate is bound at residue Arg32. 4 residues coordinate K(+): Asn34, Ser36, Asp66, and Thr67. An ATP-binding site is contributed by 34–37 (NFSH). Positions 73 and 156 each coordinate ATP. Glu222 provides a ligand contact to Mg(2+). Substrate is bound by residues Gly245, Asp246, and Thr278. Asp246 lines the Mg(2+) pocket.

Belongs to the pyruvate kinase family. As to quaternary structure, homotetramer. It depends on Mg(2+) as a cofactor. Requires K(+) as cofactor.

The catalysed reaction is pyruvate + ATP = phosphoenolpyruvate + ADP + H(+). Its pathway is carbohydrate degradation; glycolysis; pyruvate from D-glyceraldehyde 3-phosphate: step 5/5. The polypeptide is Pyruvate kinase I (pykF) (Salmonella typhi).